We begin with the raw amino-acid sequence, 348 residues long: Galanin receptor type 1 (348 aa).

Over Met1–Phe34 the chain is Extracellular. Residues Asn7 and Asn12 are each glycosylated (N-linked (GlcNAc...) asparagine). A helical transmembrane segment spans residues Ile35–Ile55. Residues Thr56–Thr70 are Cytoplasmic-facing. Residues Asn71–Phe91 form a helical membrane-spanning segment. Residues Gln92–Lys109 are Extracellular-facing. Cys108 and Cys186 are oxidised to a cystine. Residues Phe110–Val131 traverse the membrane as a helical segment. Over Asp132–Asn151 the chain is Cytoplasmic. Residues Ala152–Tyr172 form a helical membrane-spanning segment. At His173–Lys197 the chain is on the extracellular side. An N-linked (GlcNAc...) asparagine glycan is attached at Asn182. The chain crosses the membrane as a helical span at residues Ala198–Cys218. At Tyr219–Thr247 the chain is on the cytoplasmic side. Residues Val248 to Trp268 form a helical membrane-spanning segment. Topologically, residues Ala269–Glu270 are extracellular. Residues Phe271–Ala291 traverse the membrane as a helical segment. Residues Tyr292–Val348 are Cytoplasmic-facing. Cys319 carries S-palmitoyl cysteine lipidation. A compositionally biased stretch (basic and acidic residues) spans Ser328 to Met337. Residues Ser328 to Val348 are disordered.

It belongs to the G-protein coupled receptor 1 family. Interacts with GRP39 AND HTR1A. In terms of processing, three cysteine residues are found in the C-terminus, at least one of which may be palmitoylated. As to expression, expression is detected in brain, spinal cord, heart and skeletal muscle.

The protein resides in the cell membrane. In terms of biological role, receptor for the hormone galanin. The activity of this receptor is mediated by G proteins that inhibit adenylate cyclase activity. In Mus musculus (Mouse), this protein is Galanin receptor type 1 (Galr1).